The chain runs to 116 residues: Flagellar hook-basal body complex protein FliE (116 aa).

This sequence belongs to the FliE family.

The protein localises to the bacterial flagellum basal body. This is Flagellar hook-basal body complex protein FliE from Rhizobium rhizogenes (strain K84 / ATCC BAA-868) (Agrobacterium radiobacter).